The primary structure comprises 258 residues: MTDERVSADGGMETSFGFRDVGTGEKQPLVNDVFHKVAKRYDVMNDVMSAGLHRVWKDAMIAALNPPRRENYRVLDVAGGTGDIAFRIVEASGRKAHATVLDINGSMLAVGAERARKKGLLGNLEFVEANAEDLPFAANSFDAYTIAFGIRNVPRIEVALKEAYRVLKRGGRLLVLEFSEVEMPLLDRFYDAWSFNAIPKFGKLITGDEAPYQYLVESIRKFPNQRDFAAMIRTAGFGRVSFTNYTGGIAALHSGWKI.

Residues Thr-81, Asp-102, and Asn-130–Ala-131 contribute to the S-adenosyl-L-methionine site.

This sequence belongs to the class I-like SAM-binding methyltransferase superfamily. MenG/UbiE family.

It catalyses the reaction a 2-demethylmenaquinol + S-adenosyl-L-methionine = a menaquinol + S-adenosyl-L-homocysteine + H(+). The catalysed reaction is a 2-methoxy-6-(all-trans-polyprenyl)benzene-1,4-diol + S-adenosyl-L-methionine = a 5-methoxy-2-methyl-3-(all-trans-polyprenyl)benzene-1,4-diol + S-adenosyl-L-homocysteine + H(+). It participates in quinol/quinone metabolism; menaquinone biosynthesis; menaquinol from 1,4-dihydroxy-2-naphthoate: step 2/2. The protein operates within cofactor biosynthesis; ubiquinone biosynthesis. Methyltransferase required for the conversion of demethylmenaquinol (DMKH2) to menaquinol (MKH2) and the conversion of 2-polyprenyl-6-methoxy-1,4-benzoquinol (DDMQH2) to 2-polyprenyl-3-methyl-6-methoxy-1,4-benzoquinol (DMQH2). The chain is Ubiquinone/menaquinone biosynthesis C-methyltransferase UbiE from Sinorhizobium fredii (strain NBRC 101917 / NGR234).